The following is a 307-amino-acid chain: Taste receptor type 2 member 41 (307 aa).

Residues 1–7 (MQAALTA) lie on the Extracellular side of the membrane. A helical membrane pass occupies residues 8–28 (FFMLFFSLLSLLGIAANGFIV). Residues 29 to 40 (LVLGREWLQYGR) are Cytoplasmic-facing. The helical transmembrane segment at 41–61 (LLPLDMILISLGVSRFCLQLV) threads the bilayer. Residues 62 to 88 (GTVYNFYYSAHKVEYSGGLSRQFFHLH) are Extracellular-facing. Residues 89-109 (WHFLNLATFXFCSWLSVLFCV) traverse the membrane as a helical segment. The Cytoplasmic portion of the chain corresponds to 110 to 129 (KXANITHPTFLWLKWRFPGW). The chain crosses the membrane as a helical span at residues 130-150 (VPWLLLGSVLISFIITLLLFW). The Extracellular portion of the chain corresponds to 151 to 183 (VNYPVYQEFLIRKFSGNMTYEWNTRIEMYYLPS). Asn167 is a glycosylation site (N-linked (GlcNAc...) asparagine). A helical transmembrane segment spans residues 184–204 (LKLVIWSIPCSVFLVSIMLLI). Residues 205-234 (NSLRRHTWRMQHNGHSLQDPSTQAHTRAXK) lie on the Cytoplasmic side of the membrane. A helical transmembrane segment spans residues 235–255 (SLISFLILYVLSFLSLIIDAT). The Extracellular portion of the chain corresponds to 256–264 (KFISMQNDF). The helical transmembrane segment at 265–285 (YWPWQTAVYLGVSVHPFILIF) threads the bilayer. The Cytoplasmic portion of the chain corresponds to 286–307 (SNLKLRSVFWKLLLLARGFWVA).

The protein belongs to the G-protein coupled receptor T2R family.

The protein localises to the membrane. Its function is as follows. Receptor that may play a role in the perception of bitterness and is gustducin-linked. May play a role in sensing the chemical composition of the gastrointestinal content. The activity of this receptor may stimulate alpha gustducin, mediate PLC-beta-2 activation and lead to the gating of TRPM5. This chain is Taste receptor type 2 member 41 (TAS2R41), found in Pongo pygmaeus (Bornean orangutan).